A 500-amino-acid polypeptide reads, in one-letter code: Lysine--tRNA ligase (500 aa).

Mg(2+) is bound by residues glutamate 410 and glutamate 417.

Belongs to the class-II aminoacyl-tRNA synthetase family. In terms of assembly, homodimer. Mg(2+) serves as cofactor.

It is found in the cytoplasm. It catalyses the reaction tRNA(Lys) + L-lysine + ATP = L-lysyl-tRNA(Lys) + AMP + diphosphate. The chain is Lysine--tRNA ligase from Shewanella oneidensis (strain ATCC 700550 / JCM 31522 / CIP 106686 / LMG 19005 / NCIMB 14063 / MR-1).